Reading from the N-terminus, the 108-residue chain is uncharacterized protein (108 aa).

The N-terminal stretch at 1-20 (MNLKSIIFVLFIAFFAFSLA) is a signal peptide. Asn39 carries an N-linked (GlcNAc...) asparagine glycan.

Belongs to the Dictyostelium gerABC family.

The protein localises to the secreted. This is an uncharacterized protein from Dictyostelium discoideum (Social amoeba).